We begin with the raw amino-acid sequence, 489 residues long: Probable cytosol aminopeptidase (489 aa).

The Mn(2+) site is built by Lys-260 and Asp-265. Lys-272 is a catalytic residue. Mn(2+) contacts are provided by Asp-283, Asp-342, and Glu-344. Arg-346 is an active-site residue.

Belongs to the peptidase M17 family. It depends on Mn(2+) as a cofactor.

It localises to the cytoplasm. The catalysed reaction is Release of an N-terminal amino acid, Xaa-|-Yaa-, in which Xaa is preferably Leu, but may be other amino acids including Pro although not Arg or Lys, and Yaa may be Pro. Amino acid amides and methyl esters are also readily hydrolyzed, but rates on arylamides are exceedingly low.. The enzyme catalyses Release of an N-terminal amino acid, preferentially leucine, but not glutamic or aspartic acids.. In terms of biological role, presumably involved in the processing and regular turnover of intracellular proteins. Catalyzes the removal of unsubstituted N-terminal amino acids from various peptides. In Alcanivorax borkumensis (strain ATCC 700651 / DSM 11573 / NCIMB 13689 / SK2), this protein is Probable cytosol aminopeptidase.